A 298-amino-acid chain; its full sequence is Elongation factor Ts (298 aa).

Positions 79–82 (TDFV) are involved in Mg(2+) ion dislocation from EF-Tu.

This sequence belongs to the EF-Ts family.

It is found in the cytoplasm. In terms of biological role, associates with the EF-Tu.GDP complex and induces the exchange of GDP to GTP. It remains bound to the aminoacyl-tRNA.EF-Tu.GTP complex up to the GTP hydrolysis stage on the ribosome. The protein is Elongation factor Ts (tsf) of Mycoplasma genitalium (strain ATCC 33530 / DSM 19775 / NCTC 10195 / G37) (Mycoplasmoides genitalium).